A 1000-amino-acid chain; its full sequence is Chromosome transmission fidelity protein 18 homolog (1000 aa).

Disordered regions lie at residues 53-89, 130-159, and 272-301; these read SAGD…RDAS, AGNS…DSKF, and EFGE…SHSL. Over residues 60–70 the composition is skewed to polar residues; that stretch reads SNANSKPTGDS. Acidic residues predominate over residues 272–295; that stretch reads EFGENDSEILENDDNAGEEDDEDE. Position 396-403 (396-403) interacts with ATP; it reads GPPGLGKT. The segment covering 888 to 898 has biased composition (polar residues); it reads ARNAGRDNTTA. The tract at residues 888 to 916 is disordered; that stretch reads ARNAGRDNTTAAAAVKTADPKGAKSAAKP.

This sequence belongs to the activator 1 small subunits family. CTF18 subfamily. As to quaternary structure, component of the CTF18-RFC complex, which consists of ctf18, ctf8, dcc1, rfc2, rfc3, rfc4 and rfc5. The CTF18-RFC complex associates with pcna.

The protein resides in the nucleus. Functionally, chromosome cohesion factor involved in sister chromatid cohesion and fidelity of chromosome transmission. Component of one of the cell nuclear antigen loader complexes, CTF18-replication factor C (CTF18-RFC), which consists of ctf18, ctf8, dcc1, rfc2, rfc3, rfc4 and rfc5. The CTF18-RFC complex binds to single-stranded and primed DNAs and has weak ATPase activity that is stimulated by the presence of primed DNA, replication protein A (RPA) and by proliferating cell nuclear antigen (pcna). The CTF18-RFC complex catalyzes the ATP-dependent loading of pcna onto primed and gapped DNA. The sequence is that of Chromosome transmission fidelity protein 18 homolog (chtf18) from Xenopus laevis (African clawed frog).